The primary structure comprises 590 residues: (-)-alpha-terpineol synthase (590 aa).

5 residues coordinate Mg(2+): Asp339, Asp343, Asp483, Thr487, and Glu491. A DDXXD motif motif is present at residues 339–343 (DDVYD).

This sequence belongs to the terpene synthase family. It depends on Mg(2+) as a cofactor.

The enzyme catalyses (2E)-geranyl diphosphate + H2O = (S)-alpha-terpineol + diphosphate. The protein operates within secondary metabolite biosynthesis; terpenoid biosynthesis. Its function is as follows. Mediates the conversion of geranyl diphosphate into alpha-terpineol, a monoterpenol. Monoterpenols contribute to the final grape and wine aroma and flavor. Also forms some 1,8-cineole and traces of other monoterpenoids. This is (-)-alpha-terpineol synthase from Vitis vinifera (Grape).